We begin with the raw amino-acid sequence, 255 residues long: Syntaxin-6 (255 aa).

Ser2 is subject to N-acetylserine. Position 2 is a phosphoserine (Ser2). A required for interaction with VPS51 region spans residues 2–168 (SMEDPFFVVK…QAQQQLIVEQ (167 aa)). At 2-234 (SMEDPFFVVK…VSHMTSDRRQ (233 aa)) the chain is on the cytoplasmic side. Residues 41–74 (EEIDWTTNELRNNLRSIEWDLEDLDETISIVEAN) adopt a coiled-coil conformation. Phosphoserine is present on residues Ser129 and Ser152. The t-SNARE coiled-coil homology domain occupies 163–225 (QLIVEQQDEQ…DNVMKKLAKV (63 aa)). A helical; Anchor for type IV membrane protein transmembrane segment spans residues 235-255 (WCAIAILFAVLLVVLILFLVL).

The protein belongs to the syntaxin family. In terms of assembly, identified in a complex containing STX6, STX12, VAMP4 and VTI1A. Binds EEA1. Interacts with VPS45A. Interacts with MARCHF2; the interaction promotes MARCHF2-mediated ubiquitination and degradation of CFTR. Interacts with MARCHF3. Interacts with GOPC. Interacts with BLTP3B (via C-terminal coiled-coil domain). Interacts with BAIAP3; this interaction is increased in the presence of calcium. Interacts with VPS13B.

It localises to the golgi apparatus membrane. The protein resides in the golgi apparatus. The protein localises to the trans-Golgi network membrane. Its subcellular location is the recycling endosome membrane. SNARE promoting movement of transport vesicles to target membranes. Targets endosomes to the trans-Golgi network, and may therefore function in retrograde trafficking. Together with SNARE STX12, promotes movement of vesicles from endosomes to the cell membrane, and may therefore function in the endocytic recycling pathway. The protein is Syntaxin-6 (STX6) of Homo sapiens (Human).